The following is a 263-amino-acid chain: L-aspartate dehydrogenase (263 aa).

2 residues coordinate NAD(+): A120 and N186. H216 is an active-site residue.

Belongs to the L-aspartate dehydrogenase family.

It carries out the reaction L-aspartate + NADP(+) + H2O = oxaloacetate + NH4(+) + NADPH + H(+). The enzyme catalyses L-aspartate + NAD(+) + H2O = oxaloacetate + NH4(+) + NADH + H(+). It participates in cofactor biosynthesis; NAD(+) biosynthesis; iminoaspartate from L-aspartate (dehydrogenase route): step 1/1. In terms of biological role, specifically catalyzes the NAD or NADP-dependent dehydrogenation of L-aspartate to iminoaspartate. The sequence is that of L-aspartate dehydrogenase from Acinetobacter baumannii (strain AB307-0294).